Consider the following 227-residue polypeptide: MPIKAILTDIEGTTSAVSFVFDVLFPFARAHLPDFVRQHAEQPQVAAQLQAVRTQSAEPDADVERVIAILLEWIAEDRKATPLKALQGMVWEQGYNAGQLKGHVYPDAVDALQHWHQQGYRLFVYSSGSIQAQQLIFGCSEAGDLSGLFSGYFDTTSGPKREAQSYQTIANATGFAAEEILFLSDIVEELDAAKAAGMLTCGLARDGGVLAGHRHVNSFTLIDPASF.

This sequence belongs to the HAD-like hydrolase superfamily. MasA/MtnC family. As to quaternary structure, monomer. Mg(2+) is required as a cofactor.

The catalysed reaction is 5-methylsulfanyl-2,3-dioxopentyl phosphate + H2O = 1,2-dihydroxy-5-(methylsulfanyl)pent-1-en-3-one + phosphate. The protein operates within amino-acid biosynthesis; L-methionine biosynthesis via salvage pathway; L-methionine from S-methyl-5-thio-alpha-D-ribose 1-phosphate: step 3/6. It participates in amino-acid biosynthesis; L-methionine biosynthesis via salvage pathway; L-methionine from S-methyl-5-thio-alpha-D-ribose 1-phosphate: step 4/6. In terms of biological role, bifunctional enzyme that catalyzes the enolization of 2,3-diketo-5-methylthiopentyl-1-phosphate (DK-MTP-1-P) into the intermediate 2-hydroxy-3-keto-5-methylthiopentenyl-1-phosphate (HK-MTPenyl-1-P), which is then dephosphorylated to form the acireductone 1,2-dihydroxy-3-keto-5-methylthiopentene (DHK-MTPene). This is Enolase-phosphatase E1 from Pseudomonas syringae pv. tomato (strain ATCC BAA-871 / DC3000).